A 321-amino-acid polypeptide reads, in one-letter code: Lipoyl synthase (321 aa).

Residues Cys68, Cys73, Cys79, Cys94, Cys98, Cys101, and Ser308 each contribute to the [4Fe-4S] cluster site. The Radical SAM core domain maps to 80–297; sequence FNHGTATFMI…KEEALAMGFT (218 aa).

This sequence belongs to the radical SAM superfamily. Lipoyl synthase family. [4Fe-4S] cluster serves as cofactor.

Its subcellular location is the cytoplasm. The enzyme catalyses [[Fe-S] cluster scaffold protein carrying a second [4Fe-4S](2+) cluster] + N(6)-octanoyl-L-lysyl-[protein] + 2 oxidized [2Fe-2S]-[ferredoxin] + 2 S-adenosyl-L-methionine + 4 H(+) = [[Fe-S] cluster scaffold protein] + N(6)-[(R)-dihydrolipoyl]-L-lysyl-[protein] + 4 Fe(3+) + 2 hydrogen sulfide + 2 5'-deoxyadenosine + 2 L-methionine + 2 reduced [2Fe-2S]-[ferredoxin]. The protein operates within protein modification; protein lipoylation via endogenous pathway; protein N(6)-(lipoyl)lysine from octanoyl-[acyl-carrier-protein]: step 2/2. Catalyzes the radical-mediated insertion of two sulfur atoms into the C-6 and C-8 positions of the octanoyl moiety bound to the lipoyl domains of lipoate-dependent enzymes, thereby converting the octanoylated domains into lipoylated derivatives. The chain is Lipoyl synthase from Photorhabdus laumondii subsp. laumondii (strain DSM 15139 / CIP 105565 / TT01) (Photorhabdus luminescens subsp. laumondii).